The sequence spans 181 residues: Cytochrome c-type biogenesis protein CcmE (181 aa).

Topologically, residues 1-8 (MNPRRKSR) are cytoplasmic. The helical; Signal-anchor for type II membrane protein transmembrane segment at 9–29 (LKVVVLIMFSVAVAAGLTLYA) threads the bilayer. Topologically, residues 30-181 (LSQNIDLFYT…TFNTLQGESK (152 aa)) are periplasmic. Heme-binding residues include H131 and Y135.

This sequence belongs to the CcmE/CycJ family.

It localises to the cell inner membrane. Functionally, heme chaperone required for the biogenesis of c-type cytochromes. Transiently binds heme delivered by CcmC and transfers the heme to apo-cytochromes in a process facilitated by CcmF and CcmH. The protein is Cytochrome c-type biogenesis protein CcmE of Haemophilus ducreyi (strain 35000HP / ATCC 700724).